The primary structure comprises 124 residues: Small ribosomal subunit protein uS12 (124 aa).

Positions 1–25 are disordered; it reads MPTINQLIRKPRKSQKEKTASPALQ. Position 89 is a 3-methylthioaspartic acid (D89).

Belongs to the universal ribosomal protein uS12 family. In terms of assembly, part of the 30S ribosomal subunit. Contacts proteins S8 and S17. May interact with IF1 in the 30S initiation complex.

Its function is as follows. With S4 and S5 plays an important role in translational accuracy. Functionally, interacts with and stabilizes bases of the 16S rRNA that are involved in tRNA selection in the A site and with the mRNA backbone. Located at the interface of the 30S and 50S subunits, it traverses the body of the 30S subunit contacting proteins on the other side and probably holding the rRNA structure together. The combined cluster of proteins S8, S12 and S17 appears to hold together the shoulder and platform of the 30S subunit. This chain is Small ribosomal subunit protein uS12, found in Borrelia turicatae (strain 91E135).